A 348-amino-acid polypeptide reads, in one-letter code: Oxygen-dependent coproporphyrinogen-III oxidase (348 aa).

A substrate-binding site is contributed by serine 104. The a divalent metal cation site is built by histidine 108 and histidine 118. The Proton donor role is filled by histidine 118. Residue 120-122 (NYR) coordinates substrate. The a divalent metal cation site is built by histidine 152 and histidine 182. The tract at residues 272 to 307 (YAEFNLVWDRGTIFGLQTNGRTESILMSLPPLARWE) is important for dimerization.

Belongs to the aerobic coproporphyrinogen-III oxidase family. In terms of assembly, homodimer. A divalent metal cation is required as a cofactor.

The protein resides in the cytoplasm. It catalyses the reaction coproporphyrinogen III + O2 + 2 H(+) = protoporphyrinogen IX + 2 CO2 + 2 H2O. It functions in the pathway porphyrin-containing compound metabolism; protoporphyrin-IX biosynthesis; protoporphyrinogen-IX from coproporphyrinogen-III (O2 route): step 1/1. Functionally, involved in the heme and chlorophyll biosynthesis. Catalyzes the aerobic oxidative decarboxylation of propionate groups of rings A and B of coproporphyrinogen-III to yield the vinyl groups in protoporphyrinogen-IX. The protein is Oxygen-dependent coproporphyrinogen-III oxidase of Prochlorococcus marinus (strain NATL1A).